The chain runs to 359 residues: Serine/threonine-protein phosphatase 2A activator 2 (359 aa).

This sequence belongs to the PTPA-type PPIase family.

It is found in the cytoplasm. It catalyses the reaction [protein]-peptidylproline (omega=180) = [protein]-peptidylproline (omega=0). PPIases accelerate the folding of proteins. It catalyzes the cis-trans isomerization of proline imidic peptide bonds in oligopeptides. Acts as a regulatory subunit for PP2A-like phosphatases modulating their activity or substrate specificity, probably by inducing a conformational change in the catalytic subunit, a direct target of the PPIase. Can reactivate inactive phosphatase PP2A-phosphatase methylesterase complexes (PP2Ai) in presence of ATP and Mg(2+) by dissociating the inactive form from the complex. In Eremothecium gossypii (strain ATCC 10895 / CBS 109.51 / FGSC 9923 / NRRL Y-1056) (Yeast), this protein is Serine/threonine-protein phosphatase 2A activator 2 (RRD2).